A 468-amino-acid chain; its full sequence is Trehalose-binding lipoprotein LpqY (468 aa).

Positions 1-25 (MVMSRGRIPRLGAAVLVALTTAAAA) are cleaved as a signal peptide. Cysteine 26 carries N-palmitoyl cysteine lipidation. Residue cysteine 26 is the site of S-diacylglycerol cysteine attachment. Cysteine 54 and cysteine 372 are joined by a disulfide. Residues aspartate 97, asparagine 151, tryptophan 276, phenylalanine 278, glycine 351, and arginine 421 each coordinate alpha,alpha-trehalose.

Belongs to the bacterial solute-binding protein 1 family. Monomer. The complex is composed of two ATP-binding proteins (SugC), two transmembrane proteins (SugA and SugB) and a solute-binding protein (LpqY).

It localises to the cell inner membrane. Its function is as follows. Part of the ABC transporter complex LpqY-SugA-SugB-SugC, which is highly specific for uptake of trehalose. Involved in the recycling of extracellular trehalose released from trehalose-containing molecules synthesized by M.tuberculosis. Trehalose uptake is essential for virulence. This chain is Trehalose-binding lipoprotein LpqY (lpqY), found in Mycobacterium tuberculosis (strain CDC 1551 / Oshkosh).